The following is a 366-amino-acid chain: uncharacterized protein (366 aa).

6 helical membrane passes run isoleucine 164–isoleucine 184, isoleucine 188–leucine 208, valine 223–leucine 243, phenylalanine 256–methionine 276, phenylalanine 299–leucine 319, and phenylalanine 325–isoleucine 345.

It to A.fulgidus AF2058.

Its subcellular location is the cell membrane. This is an uncharacterized protein from Methanocaldococcus jannaschii (strain ATCC 43067 / DSM 2661 / JAL-1 / JCM 10045 / NBRC 100440) (Methanococcus jannaschii).